Consider the following 245-residue polypeptide: Chymotrypsinogen A (245 aa).

5 cysteine pairs are disulfide-bonded: C1-C122, C42-C58, C136-C201, C168-C182, and C191-C220. A propeptide spanning residues 14 to 15 (SR) is cleaved from the precursor. In terms of domain architecture, Peptidase S1 spans 16-243 (IVNGEEAVPG…LVNWVQQTLA (228 aa)). Residues H57 and D102 each act as charge relay system in the active site. Positions 147–148 (TN) are excised as a propeptide. The Charge relay system role is filled by S195.

It belongs to the peptidase S1 family.

The protein localises to the secreted. It localises to the extracellular space. The enzyme catalyses Preferential cleavage: Tyr-|-Xaa, Trp-|-Xaa, Phe-|-Xaa, Leu-|-Xaa.. This Bos taurus (Bovine) protein is Chymotrypsinogen A.